The chain runs to 491 residues: Proline--tRNA ligase (491 aa).

It belongs to the class-II aminoacyl-tRNA synthetase family. ProS type 3 subfamily. As to quaternary structure, homodimer.

The protein resides in the cytoplasm. The catalysed reaction is tRNA(Pro) + L-proline + ATP = L-prolyl-tRNA(Pro) + AMP + diphosphate. Catalyzes the attachment of proline to tRNA(Pro) in a two-step reaction: proline is first activated by ATP to form Pro-AMP and then transferred to the acceptor end of tRNA(Pro). In Halorubrum lacusprofundi (strain ATCC 49239 / DSM 5036 / JCM 8891 / ACAM 34), this protein is Proline--tRNA ligase.